A 406-amino-acid polypeptide reads, in one-letter code: Type II secretion system protein F (406 aa).

The Cytoplasmic segment spans residues 1–171 (MAAFEYKALD…KMRSKLQQAM (171 aa)). The Ca(2+) site is built by E97, E151, and D155. A helical transmembrane segment spans residues 172–192 (IYPVVLVVFAVGIVAFLLAAV). Over 193–223 (VPKIVGQFVQMGQALPASTQFLLDASDFLQH) the chain is Periplasmic. The chain crosses the membrane as a helical span at residues 224 to 244 (WGISLLVGLLMLIYLVRWLLT). Residues 245 to 368 (KPDIRLRWDR…QDNSFESTVN (124 aa)) lie on the Cytoplasmic side of the membrane. The helical transmembrane segment at 369 to 389 (IALGIFTPALIALMAGMVLFI) threads the bilayer. Topologically, residues 390 to 406 (VMATLMPILEMNNLMSR) are periplasmic.

This sequence belongs to the GSP F family. As to quaternary structure, type II secretion system is composed of four main components: the outer membrane complex, the inner membrane complex, the cytoplasmic secretion ATPase and the periplasm-spanning pseudopilus. Homodimer. Interacts with EpsE/GspE and EpsL/GspL components.

It is found in the cell inner membrane. Its function is as follows. Component of the type II secretion system inner membrane complex required for the energy-dependent secretion of extracellular factors such as proteases and toxins from the periplasm. The protein is Type II secretion system protein F (epsF) of Vibrio cholerae serotype O1 (strain ATCC 39315 / El Tor Inaba N16961).